The chain runs to 141 residues: Large-conductance mechanosensitive channel (141 aa).

The next 2 helical transmembrane spans lie at 16-36 (VVDLAVGVIIGGAFGKIVSSM) and 83-103 (GNFIQTVIDFTILAFVIFLMV).

It belongs to the MscL family. As to quaternary structure, homopentamer.

The protein resides in the cell inner membrane. In terms of biological role, channel that opens in response to stretch forces in the membrane lipid bilayer. May participate in the regulation of osmotic pressure changes within the cell. The chain is Large-conductance mechanosensitive channel from Cytophaga hutchinsonii (strain ATCC 33406 / DSM 1761 / CIP 103989 / NBRC 15051 / NCIMB 9469 / D465).